The primary structure comprises 44 residues: Putative keratin-associated protein 20-4 (44 aa).

The protein belongs to the KRTAP type 20 family. Interacts with hair keratins.

Functionally, in the hair cortex, hair keratin intermediate filaments are embedded in an interfilamentous matrix, consisting of hair keratin-associated proteins (KRTAP), which are essential for the formation of a rigid and resistant hair shaft through their extensive disulfide bond cross-linking with abundant cysteine residues of hair keratins. The matrix proteins include the high-sulfur and high-glycine-tyrosine keratins. In Homo sapiens (Human), this protein is Putative keratin-associated protein 20-4 (KRTAP20-4).